The sequence spans 93 residues: Small ribosomal subunit protein uS15 (93 aa).

This sequence belongs to the universal ribosomal protein uS15 family. As to quaternary structure, part of the 30S ribosomal subunit. Forms a bridge to the 50S subunit in the 70S ribosome, contacting the 23S rRNA.

One of the primary rRNA binding proteins, it binds directly to 16S rRNA where it helps nucleate assembly of the platform of the 30S subunit by binding and bridging several RNA helices of the 16S rRNA. In terms of biological role, forms an intersubunit bridge (bridge B4) with the 23S rRNA of the 50S subunit in the ribosome. This chain is Small ribosomal subunit protein uS15, found in Anaplasma marginale (strain St. Maries).